The following is a 511-amino-acid chain: Coatomer subunit delta (511 aa).

Basic and acidic residues predominate over residues 168–177; sequence QARRDAERQG. Residues 168 to 196 form a disordered region; the sequence is QARRDAERQGKKAPGFGGFGSSTVSGGST. Residue Ser-223 is modified to Phosphoserine. An N6-acetyllysine mark is found at Lys-233 and Lys-241. Ser-244 carries the phosphoserine modification. Residues 271-511 form the MHD domain; that stretch reads MESVHMKIEE…TFLVDKYEIL (241 aa). 2 positions are modified to N6-acetyllysine: Lys-309 and Lys-351. A Phosphoserine modification is found at Ser-493.

It belongs to the adaptor complexes medium subunit family. Delta-COP subfamily. Oligomeric complex that consists of at least the alpha, beta, beta', gamma, delta, epsilon and zeta subunits. As to expression, ubiquitously expressed.

It localises to the cytoplasm. The protein resides in the golgi apparatus membrane. Its subcellular location is the cytoplasmic vesicle. It is found in the COPI-coated vesicle membrane. Its function is as follows. The coatomer is a cytosolic protein complex that binds to dilysine motifs and reversibly associates with Golgi non-clathrin-coated vesicles, which further mediate biosynthetic protein transport from the ER, via the Golgi up to the trans Golgi network. Coatomer complex is required for budding from Golgi membranes, and is essential for the retrograde Golgi-to-ER transport of dilysine-tagged proteins. In mammals, the coatomer can only be recruited by membranes associated to ADP-ribosylation factors (ARFs), which are small GTP-binding proteins; the complex also influences the Golgi structural integrity, as well as the processing, activity, and endocytic recycling of LDL receptors. The polypeptide is Coatomer subunit delta (ARCN1) (Bos taurus (Bovine)).